Consider the following 223-residue polypeptide: Small ribosomal subunit protein uS3 (223 aa).

Positions L38 to N106 constitute a KH type-2 domain.

It belongs to the universal ribosomal protein uS3 family. In terms of assembly, part of the 30S ribosomal subunit. Forms a tight complex with proteins S10 and S14.

Binds the lower part of the 30S subunit head. Binds mRNA in the 70S ribosome, positioning it for translation. The chain is Small ribosomal subunit protein uS3 from Acidobacterium capsulatum (strain ATCC 51196 / DSM 11244 / BCRC 80197 / JCM 7670 / NBRC 15755 / NCIMB 13165 / 161).